The following is a 404-amino-acid chain: Transcription factor sem-2 (404 aa).

The segment at residues 93 to 161 (IKRPMNAFMV…CHMQEYPDYK (69 aa)) is a DNA-binding region (HMG box). Disordered regions lie at residues 158–218 (PDYK…QFQN) and 321–359 (HTSPPSVDQDDMRSLSSGSSGYADCSASEQSTSSPNSAG). Low complexity predominate over residues 177–199 (QQPAQPQAPQQQQAPPRGASPQA). 2 stretches are compositionally biased toward polar residues: residues 207–218 (TDQQSETQQFQN) and 347–359 (ASEQSTSSPNSAG).

Its subcellular location is the nucleus. Probable transcription factor required for embryogenesis, vulval development and cell fate specification of the postembryonic mesoderm (also known as the M lineage). Specifically, required for the specification of sex myoblast cells and their development into the muscles that are necessary for egg-laying. In addition, may be involved in RME GABAergic motor neuron progenitor cell fate specification. In Caenorhabditis elegans, this protein is Transcription factor sem-2.